The primary structure comprises 367 residues: tRNA(Ile)-lysidine synthase (367 aa).

32–37 provides a ligand contact to ATP; the sequence is SGGSDS.

It belongs to the tRNA(Ile)-lysidine synthase family.

Its subcellular location is the cytoplasm. It carries out the reaction cytidine(34) in tRNA(Ile2) + L-lysine + ATP = lysidine(34) in tRNA(Ile2) + AMP + diphosphate + H(+). Its function is as follows. Ligates lysine onto the cytidine present at position 34 of the AUA codon-specific tRNA(Ile) that contains the anticodon CAU, in an ATP-dependent manner. Cytidine is converted to lysidine, thus changing the amino acid specificity of the tRNA from methionine to isoleucine. In Hyphomonas neptunium (strain ATCC 15444), this protein is tRNA(Ile)-lysidine synthase.